Reading from the N-terminus, the 124-residue chain is Probable S-adenosyl-L-methionine-binding protein VNG_1115H (124 aa).

The TsaA-like domain occupies 3 to 124; that stretch reads ATPIGYADTR…PVLDLKPALD (122 aa). S-adenosyl-L-methionine is bound by residues 20 to 22, 58 to 59, R78, and 111 to 114; these read PRQ, DD, and AHGS.

It belongs to the tRNA methyltransferase O family.

The polypeptide is Probable S-adenosyl-L-methionine-binding protein VNG_1115H (Halobacterium salinarum (strain ATCC 700922 / JCM 11081 / NRC-1) (Halobacterium halobium)).